Here is a 392-residue protein sequence, read N- to C-terminus: General receptor for phosphoinositides 1-associated scaffold protein (392 aa).

The segment at 1–50 (MTLRRLRKLQQKEEATAAPDPAGRAPDSEAARAAPLPSGPPAAAAPPGAP) is disordered. Pro residues predominate over residues 37–49 (PSGPPAAAAPPGA). Phosphothreonine is present on Thr76. Ser93 carries the phosphoserine modification. The 90-residue stretch at 100-189 (VLTLEKGDNQ…VLRLETLYGT (90 aa)) folds into the PDZ domain. Positions 180–257 (VLRLETLYGT…GAGLLPGSLP (78 aa)) are interaction with PSCD3. A Phosphotyrosine modification is found at Tyr236. Arg269 is subject to Omega-N-methylarginine. The segment at 294 to 315 (PQALPPPPPPARALGPSSAETP) is disordered. Phosphoserine is present on Ser384.

In terms of assembly, heteromer. Composed of TAMALIN, CYTH2 and at least one GRM1. Also interacts with GRM2, GRM3 and GRM5. Interacts with CYTH3. In terms of tissue distribution, highly expressed in brain, heart and lung, and to a lower extent in embryo, kidney and ovary.

The protein resides in the cytoplasm. It is found in the perinuclear region. It localises to the cell membrane. Its subcellular location is the postsynaptic cell membrane. Its function is as follows. Plays a role in intracellular trafficking and contributes to the macromolecular organization of group 1 metabotropic glutamate receptors (mGluRs) at synapses. The protein is General receptor for phosphoinositides 1-associated scaffold protein of Mus musculus (Mouse).